A 238-amino-acid chain; its full sequence is Ribonuclease PH (238 aa).

Phosphate-binding positions include Arg-86 and 124 to 126 (GTR).

It belongs to the RNase PH family. In terms of assembly, homohexameric ring arranged as a trimer of dimers.

The enzyme catalyses tRNA(n+1) + phosphate = tRNA(n) + a ribonucleoside 5'-diphosphate. Functionally, phosphorolytic 3'-5' exoribonuclease that plays an important role in tRNA 3'-end maturation. Removes nucleotide residues following the 3'-CCA terminus of tRNAs; can also add nucleotides to the ends of RNA molecules by using nucleoside diphosphates as substrates, but this may not be physiologically important. Probably plays a role in initiation of 16S rRNA degradation (leading to ribosome degradation) during starvation. This is Ribonuclease PH from Mannheimia haemolytica (Pasteurella haemolytica).